Here is an 89-residue protein sequence, read N- to C-terminus: MSLSTEATAKIVSEFGRDANDTGSTEVQVALLTAQINHLQGHFAEHKKDHHSRRGLLRMVSQRRKLLDYLKRKDVARYTQLIERLGLRR.

The protein belongs to the universal ribosomal protein uS15 family. Part of the 30S ribosomal subunit. Forms a bridge to the 50S subunit in the 70S ribosome, contacting the 23S rRNA.

In terms of biological role, one of the primary rRNA binding proteins, it binds directly to 16S rRNA where it helps nucleate assembly of the platform of the 30S subunit by binding and bridging several RNA helices of the 16S rRNA. Forms an intersubunit bridge (bridge B4) with the 23S rRNA of the 50S subunit in the ribosome. This chain is Small ribosomal subunit protein uS15, found in Escherichia coli O139:H28 (strain E24377A / ETEC).